Reading from the N-terminus, the 980-residue chain is Valine--tRNA ligase (980 aa).

The short motif at 43-53 (PNVTGTLHMGH) is the 'HIGH' region element. A 'KMSKS' region motif is present at residues 586–590 (KMSKS). Lysine 589 serves as a coordination point for ATP. The stretch at 914-978 (LVDMDAERTR…QLTGLREQRA (65 aa)) forms a coiled coil.

The protein belongs to the class-I aminoacyl-tRNA synthetase family. ValS type 1 subfamily. In terms of assembly, monomer.

It is found in the cytoplasm. The catalysed reaction is tRNA(Val) + L-valine + ATP = L-valyl-tRNA(Val) + AMP + diphosphate. Functionally, catalyzes the attachment of valine to tRNA(Val). As ValRS can inadvertently accommodate and process structurally similar amino acids such as threonine, to avoid such errors, it has a 'posttransfer' editing activity that hydrolyzes mischarged Thr-tRNA(Val) in a tRNA-dependent manner. This Xanthomonas euvesicatoria pv. vesicatoria (strain 85-10) (Xanthomonas campestris pv. vesicatoria) protein is Valine--tRNA ligase.